The sequence spans 191 residues: Early nodulin-like protein 8 (191 aa).

Residues 1–22 (MGVMSLSKTMVVVVLQVMILLG) form the signal peptide. Residues 31–133 (TLYKVGDLDA…YQKLLVSVGT (103 aa)) enclose the Phytocyanin domain. An intrachain disulfide couples Cys87 to Cys121. Asn104 and Asn108 each carry an N-linked (GlcNAc...) asparagine glycan. The GPI-anchor amidated serine moiety is linked to residue Ser165. The propeptide at 166 to 191 (SASSSLISAFSTVAASLACAVVGAIM) is removed in mature form.

It belongs to the early nodulin-like (ENODL) family. As to expression, mostly expressed in seedlings and roots, and, to a lower extent, in leaves, flowers, stems and seeds.

Its subcellular location is the cell membrane. Functionally, may act as a carbohydrate transporter. The chain is Early nodulin-like protein 8 from Arabidopsis thaliana (Mouse-ear cress).